The following is a 648-amino-acid chain: Biosynthetic arginine decarboxylase (648 aa).

Residue Lys-109 is modified to N6-(pyridoxal phosphate)lysine. 291–301 lines the substrate pocket; that stretch reads IDVGGGLGIDF.

It belongs to the Orn/Lys/Arg decarboxylase class-II family. SpeA subfamily. It depends on Mg(2+) as a cofactor. Pyridoxal 5'-phosphate is required as a cofactor.

It catalyses the reaction L-arginine + H(+) = agmatine + CO2. Functionally, catalyzes the biosynthesis of agmatine from arginine. This chain is Biosynthetic arginine decarboxylase, found in Prochlorococcus marinus subsp. pastoris (strain CCMP1986 / NIES-2087 / MED4).